Here is a 164-residue protein sequence, read N- to C-terminus: Nucleotide-binding protein Helmi_22490 (164 aa).

Belongs to the YajQ family.

Its function is as follows. Nucleotide-binding protein. In Heliobacterium modesticaldum (strain ATCC 51547 / Ice1), this protein is Nucleotide-binding protein Helmi_22490.